The sequence spans 74 residues: Conotoxin MiEr93 (74 aa).

A signal peptide spans 1–22 (MKLTCVLIIAVLFLTAYQLATA). The propeptide occupies 23-45 (ASYAKGKQKHRALRPADKHLRLT). Disulfide bonds link cysteine 48/cysteine 62, cysteine 55/cysteine 66, and cysteine 61/cysteine 73.

This sequence belongs to the conotoxin O1 superfamily. In terms of tissue distribution, expressed by the venom duct.

It localises to the secreted. This Conus miles (Soldier cone) protein is Conotoxin MiEr93.